A 273-amino-acid chain; its full sequence is Shikimate dehydrogenase (NADP(+)) (273 aa).

Shikimate contacts are provided by residues 14 to 16 and Thr-61; that span reads SKS. The Proton acceptor role is filled by Lys-65. Residue Asp-77 participates in NADP(+) binding. Positions 86 and 102 each coordinate shikimate. Residues 127 to 131, 151 to 156, and Met-215 contribute to the NADP(+) site; these read GAGGA and NRTGAR. A shikimate-binding site is contributed by Tyr-217. Gly-239 lines the NADP(+) pocket.

Belongs to the shikimate dehydrogenase family. In terms of assembly, homodimer.

It carries out the reaction shikimate + NADP(+) = 3-dehydroshikimate + NADPH + H(+). Its pathway is metabolic intermediate biosynthesis; chorismate biosynthesis; chorismate from D-erythrose 4-phosphate and phosphoenolpyruvate: step 4/7. Its function is as follows. Involved in the biosynthesis of the chorismate, which leads to the biosynthesis of aromatic amino acids. Catalyzes the reversible NADPH linked reduction of 3-dehydroshikimate (DHSA) to yield shikimate (SA). This Thioalkalivibrio sulfidiphilus (strain HL-EbGR7) protein is Shikimate dehydrogenase (NADP(+)).